The following is a 317-amino-acid chain: Ribonuclease Z (317 aa).

Zn(2+)-binding residues include H63, H65, D67, H68, H143, D214, and H272. Residue D67 is the Proton acceptor of the active site.

Belongs to the RNase Z family. Homodimer. Requires Zn(2+) as cofactor.

The catalysed reaction is Endonucleolytic cleavage of RNA, removing extra 3' nucleotides from tRNA precursor, generating 3' termini of tRNAs. A 3'-hydroxy group is left at the tRNA terminus and a 5'-phosphoryl group is left at the trailer molecule.. Its function is as follows. Zinc phosphodiesterase, which displays some tRNA 3'-processing endonuclease activity. Probably involved in tRNA maturation, by removing a 3'-trailer from precursor tRNA. This Ligilactobacillus salivarius (strain UCC118) (Lactobacillus salivarius) protein is Ribonuclease Z.